The chain runs to 419 residues: Protein indeterminate-domain 14 (419 aa).

The interval 1-58 is disordered; that stretch reads MIDYERSNTTKNINTHHHNPPPSSSSSDLLPDGNGTAVTQKRKRRPAGTPDPEAEVVS. C2H2-type zinc fingers lie at residues 70 to 92, 112 to 142, and 148 to 175; these read YVCE…RRRH, YVCP…RRKH, and WICE…TRGH. Positions 150, 153, 166, 170, 177, 179, 192, and 196 each coordinate Zn(2+). A CCHC-type 2; atypical zinc finger spans residues 175-198; the sequence is HSCDCGRVFSRVESFIEHQDTCTV. Positions 185–197 are SHR-binding; that stretch reads RVESFIEHQDTCT. Disordered regions lie at residues 200-259 and 298-318; these read RSQP…PSTL and SEVE…EEAR. 2 stretches are compositionally biased toward low complexity: residues 213-230 and 246-259; these read QHTT…NNEN and RRQS…PSTL. Positions 313–349 form a coiled coil; that stretch reads EREEARRETKRQIEIAELEFAEAKRIRQHARAELHKA.

In terms of assembly, homo- and heterodimer of IDD14alpha and IDD14beta. In terms of tissue distribution, expressed in cotyledons and the vasculature of reosette leaves. Weak expression in hypocotyls and floral organs, but not detected in roots and inflorescence stems.

The protein localises to the nucleus. Transcription factor regulating starch metabolism by binding directly to the promoter of QQS. The IDD14beta isoform attenuates the transcription factor activity by competitively forming heterodimers with reduced DNA-binding capacity. Regulates lateral organ morphogenesis and gravitropic responses. Has a redundant role with IDD16 in directing leaf and floral organ morphogenesis. Involved in the establishment of auxin gradients through the regulation of auxin biosynthesis and transport. In Arabidopsis thaliana (Mouse-ear cress), this protein is Protein indeterminate-domain 14.